The sequence spans 333 residues: F420-dependent glucose-6-phosphate dehydrogenase (333 aa).

D37 contributes to the coenzyme F420-(gamma-Glu)n binding site. H38 acts as the Proton donor in catalysis. Residues T74 and 105–106 (SG) each bind coenzyme F420-(gamma-Glu)n. E107 functions as the Proton acceptor in the catalytic mechanism. Residues N110, 174 to 175 (GG), and 177 to 178 (VV) each bind coenzyme F420-(gamma-Glu)n. Substrate-binding residues include T192, K195, K256, and R280.

This sequence belongs to the F420-dependent glucose-6-phosphate dehydrogenase family. In terms of assembly, homodimer.

It carries out the reaction oxidized coenzyme F420-(gamma-L-Glu)(n) + D-glucose 6-phosphate + H(+) = 6-phospho-D-glucono-1,5-lactone + reduced coenzyme F420-(gamma-L-Glu)(n). Its function is as follows. Catalyzes the coenzyme F420-dependent oxidation of glucose 6-phosphate (G6P) to 6-phosphogluconolactone. This chain is F420-dependent glucose-6-phosphate dehydrogenase, found in Amycolatopsis mediterranei (strain U-32).